We begin with the raw amino-acid sequence, 253 residues long: MKIKIGKVEKRLNQIIEEEGAVYLTLLDPEEENIEEIAENVKDYADAIMVGGSIGIVNLDETVKKIKKITKLPIILFPGNVDGLSRYADAVFYMSLMNSANTYWVVTAPTLGAITILKYNLEPIPMAYLCIEPAKKTAVGYVGEIREIPQNKPKITAMYCLSAKFFGMRWAYLEAGSGASYPVNNETIALSKKLSGINIIVGGGIRKPEIAYEKVLAGADAIVTGNLLEENPKAVEMMYDAIKKAGKEKLKNK.

Residues D28 and S53 each contribute to the Mg(2+) site. Residues 172 to 178 (YLEAGSG), 203 to 204 (GG), and 225 to 226 (GN) each bind sn-glycerol 1-phosphate.

It belongs to the GGGP/HepGP synthase family. Group II subfamily. Mg(2+) serves as cofactor.

The protein resides in the cytoplasm. The enzyme catalyses sn-glycerol 1-phosphate + (2E,6E,10E)-geranylgeranyl diphosphate = sn-3-O-(geranylgeranyl)glycerol 1-phosphate + diphosphate. It functions in the pathway membrane lipid metabolism; glycerophospholipid metabolism. Its function is as follows. Prenyltransferase that catalyzes the transfer of the geranylgeranyl moiety of geranylgeranyl diphosphate (GGPP) to the C3 hydroxyl of sn-glycerol-1-phosphate (G1P). This reaction is the first ether-bond-formation step in the biosynthesis of archaeal membrane lipids. In Methanocaldococcus jannaschii (strain ATCC 43067 / DSM 2661 / JAL-1 / JCM 10045 / NBRC 100440) (Methanococcus jannaschii), this protein is Geranylgeranylglyceryl phosphate synthase.